The chain runs to 913 residues: Protein SEY1 homolog (913 aa).

The Cytoplasmic segment spans residues 1 to 825 (MANASKTQII…ETGGQMSLKN (825 aa)). The region spanning 33–288 (GFNYNVIAIL…IPADGFAQYC (256 aa)) is the GB1/RHD3-type G domain. 43–50 (GSQSSGKS) contacts GTP. 2 disordered regions span residues 89–108 (AGGS…GDKP) and 436–455 (TEQD…AKKG). Coiled coils occupy residues 636-659 (DDEN…MESL) and 703-727 (IEII…VIIN). Residues 826–846 (VPFAFWVILLILGWNEILMFT) form a helical membrane-spanning segment. At 847–849 (RLF) the chain is on the lumenal side. The helical transmembrane segment at 850 to 870 (FRLNIILPMFMAFIIIVGSCL) threads the bilayer. The Cytoplasmic segment spans residues 871 to 913 (YTGNAQVLSYLNKIAFIVIKHSYNFYKHLQTVGNQPTKPEKVD).

It belongs to the TRAFAC class dynamin-like GTPase superfamily. GB1/RHD3 GTPase family. RHD3 subfamily.

It is found in the endoplasmic reticulum membrane. Its function is as follows. Probable GTP-binding protein involved in generating and maintaining the structure of the tubular endoplasmic reticulum network. The chain is Protein SEY1 homolog from Plasmodium chabaudi chabaudi.